The sequence spans 1165 residues: DNA-directed RNA polymerase III subunit RPC2 (1165 aa).

The segment at M1–I21 is disordered. Zn(2+) is bound by residues C1111, C1114, C1123, and C1126. A C4-type zinc finger spans residues C1111 to C1126.

Belongs to the RNA polymerase beta chain family. Component of the RNA polymerase III (Pol III) complex consisting of 17 subunits.

It localises to the nucleus. It carries out the reaction RNA(n) + a ribonucleoside 5'-triphosphate = RNA(n+1) + diphosphate. Its function is as follows. DNA-dependent RNA polymerase catalyzes the transcription of DNA into RNA using the four ribonucleoside triphosphates as substrates. Second largest core component of RNA polymerase III which synthesizes small RNAs, such as 5S rRNA and tRNAs. Proposed to contribute to the polymerase catalytic activity and forms the polymerase active center together with the largest subunit. Pol III is composed of mobile elements and RPC2 is part of the core element with the central large cleft and probably a clamp element that moves to open and close the cleft. In Schizosaccharomyces pombe (strain 972 / ATCC 24843) (Fission yeast), this protein is DNA-directed RNA polymerase III subunit RPC2 (rpc2).